The sequence spans 398 residues: MRTVEDRSLEFLIRRDREAELPPLASLCCNYFKQRHWRDAFDDEQASLREELWAVKTQLDTIPMEAYTATRNKLFPLALSGEQQQFSNRAGHKLLESMESTGVWMELSKLLCGKSRKRPRDFAFADVCGGPGAFSQALFKAGRKQGWRHLHGYGMTLAGVSGLDWYNSLLNSPQFTCTYGLDGTGDIFKLSNIDCLVSITKAAPMFLVVADGGFSVDFSVANYQETISSRIMYGQWLAALKLLRKGGCCVLKLFDTFSPLSRAVVYLSCFLYSRVHVAKPRHSRVVNSERYLVCVDFLGYPNEAWGRYLDCFYELGFVDNEHVPELMPREWCLQDEIFMADMRDMNMTVATNQMTALQMILNAASAVEEELKAKETTTRTSAESDDSPLSSRESCKDG.

Residues 85–298 (QFSNRAGHKL…ERYLVCVDFL (214 aa)) enclose the RrmJ-type SAM-dependent 2'-O-MTase domain. Residues glycine 132 and aspartate 211 each contribute to the S-adenosyl-L-methionine site. Lysine 252 acts as the Proton acceptor in catalysis. The disordered stretch occupies residues 371-398 (LKAKETTTRTSAESDDSPLSSRESCKDG).

The enzyme catalyses a 5'-end (N(7)-methyl 5'-triphosphoguanosine)-ribonucleoside in mRNA + S-adenosyl-L-methionine = a 5'-end (N(7)-methyl 5'-triphosphoguanosine)-(2'-O-methyl-ribonucleoside) in mRNA + S-adenosyl-L-homocysteine + H(+). In terms of biological role, S-adenosyl-L-methionine-dependent methyltransferase that mediates RNA cap1 2'-O-ribose methylation to the 5'-cap structure of RNAs. Methylates the ribose of the first nucleotide of a m(7)GpppG-capped mRNA to produce m(7)GpppNmp (cap1). The protein is Cap-specific mRNA (nucleoside-2'-O-)-methyltransferase 1 of Leishmania braziliensis.